The following is a 443-amino-acid chain: Flagellum-specific ATP synthase (443 aa).

Residue 169 to 176 participates in ATP binding; it reads AGAGVGKS.

The protein belongs to the ATPase alpha/beta chains family.

The protein localises to the cytoplasm. The catalysed reaction is ATP + H2O + 4 H(+)(in) = ADP + phosphate + 5 H(+)(out). Functionally, probable catalytic subunit of a protein translocase for flagellum-specific export, or a proton translocase involved in local circuits at the flagellum. The protein is Flagellum-specific ATP synthase (fliI) of Aquifex aeolicus (strain VF5).